The following is a 498-amino-acid chain: ATP synthase subunit beta, chloroplastic (498 aa).

An ATP-binding site is contributed by 172–179 (GGAGVGKT).

Belongs to the ATPase alpha/beta chains family. As to quaternary structure, F-type ATPases have 2 components, CF(1) - the catalytic core - and CF(0) - the membrane proton channel. CF(1) has five subunits: alpha(3), beta(3), gamma(1), delta(1), epsilon(1). CF(0) has four main subunits: a(1), b(1), b'(1) and c(9-12).

It localises to the plastid. The protein resides in the chloroplast thylakoid membrane. It carries out the reaction ATP + H2O + 4 H(+)(in) = ADP + phosphate + 5 H(+)(out). In terms of biological role, produces ATP from ADP in the presence of a proton gradient across the membrane. The catalytic sites are hosted primarily by the beta subunits. This is ATP synthase subunit beta, chloroplastic from Phormium tenax (New Zealand flax).